Here is a 154-residue protein sequence, read N- to C-terminus: Large ribosomal subunit protein uL30 (154 aa).

The disordered stretch occupies residues 114 to 139 (PVLRLHPPRGGHRGQKHPTAEGGQIG). Residues 119–129 (HPPRGGHRGQK) show a composition bias toward basic residues.

The protein belongs to the universal ribosomal protein uL30 family. Part of the 50S ribosomal subunit.

The polypeptide is Large ribosomal subunit protein uL30 (Haloquadratum walsbyi (strain DSM 16790 / HBSQ001)).